Reading from the N-terminus, the 157-residue chain is Endoribonuclease YbeY (157 aa).

Histidine 118, histidine 122, and histidine 128 together coordinate Zn(2+).

Belongs to the endoribonuclease YbeY family. It depends on Zn(2+) as a cofactor.

The protein localises to the cytoplasm. Functionally, single strand-specific metallo-endoribonuclease involved in late-stage 70S ribosome quality control and in maturation of the 3' terminus of the 16S rRNA. This chain is Endoribonuclease YbeY, found in Bordetella parapertussis (strain 12822 / ATCC BAA-587 / NCTC 13253).